Reading from the N-terminus, the 341-residue chain is 1-aminocyclopropane-1-carboxylate deaminase (341 aa).

Ser-1 carries the post-translational modification N-acetylserine. Lys-51 is modified (N6-(pyridoxal phosphate)lysine). Catalysis depends on Ser-78, which acts as the Nucleophile.

It belongs to the ACC deaminase/D-cysteine desulfhydrase family. Homodimer. It depends on pyridoxal 5'-phosphate as a cofactor.

The enzyme catalyses 1-aminocyclopropane-1-carboxylate + H2O = 2-oxobutanoate + NH4(+). Functionally, catalyzes a cyclopropane ring-opening reaction, the irreversible conversion of 1-aminocyclopropane-1-carboxylate (ACC) to ammonia and alpha-ketobutyrate. In Cyberlindnera saturnus (Yeast), this protein is 1-aminocyclopropane-1-carboxylate deaminase.